The sequence spans 357 residues: 3-dehydroquinate synthase (357 aa).

Residues aspartate 69–lysine 74, glycine 103–aspartate 107, threonine 127–threonine 128, lysine 140, lysine 149, and cysteine 167–threonine 170 each bind NAD(+). Residues glutamate 182, histidine 245, and histidine 262 each contribute to the Zn(2+) site.

Belongs to the sugar phosphate cyclases superfamily. Dehydroquinate synthase family. The cofactor is Co(2+). Zn(2+) serves as cofactor. NAD(+) is required as a cofactor.

The protein resides in the cytoplasm. The enzyme catalyses 7-phospho-2-dehydro-3-deoxy-D-arabino-heptonate = 3-dehydroquinate + phosphate. It participates in metabolic intermediate biosynthesis; chorismate biosynthesis; chorismate from D-erythrose 4-phosphate and phosphoenolpyruvate: step 2/7. Catalyzes the conversion of 3-deoxy-D-arabino-heptulosonate 7-phosphate (DAHP) to dehydroquinate (DHQ). The protein is 3-dehydroquinate synthase of Idiomarina loihiensis (strain ATCC BAA-735 / DSM 15497 / L2-TR).